The following is a 323-amino-acid chain: Olfactory receptor 51S1 (323 aa).

The Extracellular segment spans residues 1 to 33 (MSTLPTQIAPNSSTSMAPTFLLVGMPGLSGAPS). An N-linked (GlcNAc...) asparagine glycan is attached at asparagine 11. The helical transmembrane segment at 34–54 (WWTLPLIAVYLLSALGNGTIL) threads the bilayer. Over 55–62 (WIIALQPA) the chain is Cytoplasmic. The chain crosses the membrane as a helical span at residues 63–83 (LHRPMHFFLFLLSVSDIGLVT). Topologically, residues 84–107 (ALMPTLLGIALAGAHTVPASACLL) are extracellular. Cysteine 105 and cysteine 197 are disulfide-bonded. The helical transmembrane segment at 108 to 128 (QMVFIHVFSVMESSVLLAMSI) threads the bilayer. The Cytoplasmic segment spans residues 129–147 (DRALAICRPLHYPALLTNG). A helical membrane pass occupies residues 148 to 168 (VISKISLAISFRCLGLHLPLP). The Extracellular portion of the chain corresponds to 169-203 (FLLAYMPYCLPQVLTHSYCLHPDVARLACPEAWGA). The chain crosses the membrane as a helical span at residues 204–224 (AYSLFVVLSAMGLDPLLIFFS). Topologically, residues 225–244 (YGLIGKVLQGVESREDRWKA) are cytoplasmic. The chain crosses the membrane as a helical span at residues 245–265 (GQTCAAHLSAVLLFYIPMILL). Residues 266 to 280 (ALINHPELPITQHTH) lie on the Extracellular side of the membrane. The chain crosses the membrane as a helical span at residues 281–301 (TLLSYVHFLLPPLINPILYSV). Residues 302-323 (KMKEIRKRILNRLQPRKVGGAQ) lie on the Cytoplasmic side of the membrane.

The protein belongs to the G-protein coupled receptor 1 family.

It localises to the cell membrane. In terms of biological role, odorant receptor. The sequence is that of Olfactory receptor 51S1 (OR51S1) from Homo sapiens (Human).